An 86-amino-acid polypeptide reads, in one-letter code: Small ribosomal subunit protein uS17 (86 aa).

It belongs to the universal ribosomal protein uS17 family. In terms of assembly, part of the 30S ribosomal subunit.

In terms of biological role, one of the primary rRNA binding proteins, it binds specifically to the 5'-end of 16S ribosomal RNA. The chain is Small ribosomal subunit protein uS17 from Dehalococcoides mccartyi (strain ATCC BAA-2266 / KCTC 15142 / 195) (Dehalococcoides ethenogenes (strain 195)).